The chain runs to 182 residues: Dihydrofolate reductase (182 aa).

A DHFR domain is found at R3–K180. Residues A9 and G15–D21 each bind NADP(+). E29–S34 contributes to the substrate binding site. R53–T55 contributes to the NADP(+) binding site. Residue R69 coordinates substrate. NADP(+)-binding positions include S75 to T77 and G113 to E120.

It belongs to the dihydrofolate reductase family. Monomer. Interacts with vg.

It catalyses the reaction (6S)-5,6,7,8-tetrahydrofolate + NADP(+) = 7,8-dihydrofolate + NADPH + H(+). It functions in the pathway cofactor biosynthesis; tetrahydrofolate biosynthesis; 5,6,7,8-tetrahydrofolate from 7,8-dihydrofolate: step 1/1. By interacting with vestigial (vg), may control genes involved in DNA replication. In terms of biological role, key enzyme in folate metabolism. Catalyzes an essential reaction for de novo glycine and purine synthesis, and for DNA precursor synthesis. The polypeptide is Dihydrofolate reductase (Dhfr) (Drosophila melanogaster (Fruit fly)).